Consider the following 589-residue polypeptide: MKSKIHHQPNGSNNGVVSSNDNGCRSESPSPPLSPNRRVLRRQRRQTLLRASSFSLRRNLRYLLLLPMIYASGLLMCVGPFSGLVGWVYVPGSVYRSPEIYRKLKDDIFSDNSTALELSSVWKFKRRPKMPKPCPNSTVSSHFGLNRESSALAPSSGYLIVEANGGLNQQRSAICNAVAVAGLLNAVLVIPRFEFHAIWKDSSNFGDIYDEDHFISSLEGYVKIVRDVPDEIMTRFSYNVSSIPTIRVQAWATVNYYNGEVYPVLKEHGVIRITPFANRLAMSVPPYIQLLRCIANYKALKFSSPISTLAEKLVDRMVEKSSATGGKYVSVHLRFEEDMVAFSCCLYEGGRAEKSEMDVIRQKSWKGKFKRRDRVIRPDLNRVNGKCPLTPLEVGMMLRGMGFDNNTSIYLASGRIYQPEKHLAPLQEMFPRLYTKESLATPEELAPFQGYSSRMAALDYTVSLLSEVFVTTQGGNFPHFLMGHRRFLFGGHAKTVIPDKPKLVLLLQDMEMRWEVFKKEMKLMLGESDRKGVMVPRVRKINRKTSIYTYPLPECECIFHLSSNFSNTGNILSLGALHPSSNLISSARL.

The tract at residues 1 to 37 (MKSKIHHQPNGSNNGVVSSNDNGCRSESPSPPLSPNR) is disordered. Over residues 10–23 (NGSNNGVVSSNDNG) the composition is skewed to low complexity. Residues 68–88 (MIYASGLLMCVGPFSGLVGWV) traverse the membrane as a helical; Signal-anchor for type II membrane protein segment. 3 N-linked (GlcNAc...) asparagine glycosylation sites follow: Asn-112, Asn-136, and Asn-239. A substrate-binding site is contributed by 332-334 (HLR). N-linked (GlcNAc...) asparagine glycans are attached at residues Asn-405, Asn-406, and Asn-564.

Belongs to the glycosyltransferase GT106 family.

The protein resides in the membrane. The protein operates within glycan metabolism. The chain is O-fucosyltransferase 11 from Arabidopsis thaliana (Mouse-ear cress).